We begin with the raw amino-acid sequence, 141 residues long: Hemoglobin subunit alpha-1/2 (141 aa).

In terms of domain architecture, Globin spans 1 to 141 (VLSPADKTNV…VSTVLTSKYR (141 aa)). Residue S3 is modified to Phosphoserine. Residue K7 is modified to N6-succinyllysine. T8 carries the post-translational modification Phosphothreonine. N6-succinyllysine is present on K11. N6-acetyllysine; alternate is present on K16. Position 16 is an N6-succinyllysine; alternate (K16). The residue at position 24 (Y24) is a Phosphotyrosine. At S35 the chain carries Phosphoserine. At K40 the chain carries N6-succinyllysine. The residue at position 49 (S49) is a Phosphoserine. Position 58 (H58) interacts with O2. H87 provides a ligand contact to heme b. Residue S102 is modified to Phosphoserine. The residue at position 108 (T108) is a Phosphothreonine. S124 bears the Phosphoserine mark. T134 and T137 each carry phosphothreonine. A Phosphoserine modification is found at S138.

It belongs to the globin family. In terms of assembly, heterotetramer of two alpha chains and two beta chains. Red blood cells.

Its function is as follows. Involved in oxygen transport from the lung to the various peripheral tissues. The polypeptide is Hemoglobin subunit alpha-1/2 (Mustela putorius (European polecat)).